The chain runs to 154 residues: MVDVAFVCLGNICRSPMAEAIMRQRLIDRNISGVNVYSKGTGKWNLGEPPHEGTQDILNRHNIPFDGMISELFESSDDFDYIIAMDQSNVDNIQNINPNIKGKLFKLLEFSNMEESDVPDPYYTNNFEGVYEMVQSSCDNLIDFIVKDANLKEG.

C8 functions as the Nucleophile in the catalytic mechanism. The active site involves R14. The active-site Proton donor is D120.

Belongs to the low molecular weight phosphotyrosine protein phosphatase family.

It carries out the reaction O-phospho-L-tyrosyl-[protein] + H2O = L-tyrosyl-[protein] + phosphate. Dephosphorylates the phosphotyrosine-containing proteins. In Staphylococcus haemolyticus (strain JCSC1435), this protein is Low molecular weight protein-tyrosine-phosphatase PtpA (ptpA).